Here is a 2359-residue protein sequence, read N- to C-terminus: Nonribosomal peptide synthetase anaPS (2359 aa).

Residues 239–633 (RNATVHGDTL…VRRKDNQVKI (395 aa)) form an adenylation 1 region. In terms of domain architecture, Carrier 1 spans 770–846 (AAQGKGEEAI…ELASAANLSN (77 aa)). Residue Ser-807 is modified to O-(pantetheine 4'-phosphoryl)serine. Residues 883 to 1292 (EDIYPSTALQ…VGDLPRMSRQ (410 aa)) form a condensation 1 region. An adenylation 2 region spans residues 1321 to 1709 (LEYPNACAVS…GRKDSQIKIR (389 aa)). A Carrier 2 domain is found at 1842–1918 (APSNSVEQDL…AIANKIGVVS (77 aa)). Residue Ser-1879 is modified to O-(pantetheine 4'-phosphoryl)serine. The interval 1936–2356 (LTPIQEFFFE…LVKCLEDLAS (421 aa)) is condensation 2.

The protein belongs to the NRP synthetase family.

The catalysed reaction is anthranilate + L-tryptophan + 2 ATP = (R)-benzodiazepinedione + 2 AMP + 2 diphosphate + H(+). Its pathway is alkaloid biosynthesis. Nonribosomal peptide synthetase; part of the gene cluster that mediates the biosynthesis of the prenylated pyrroloindoline diketopiperazine acetylaszonalenin. The first step in the pathway is the formation of (R)-benzodiazepinedione by condensation of tryptophan and anthranilic acid catalyzed by the non-ribosomal peptide synthetase anaPS. The prenyltransferase anaPT then converts (R)-benzodiazepinedione to aszonalenin in the presence of dimethylallyl diphosphate (DMAPP) via C3-prenylation. The last step in the biosynthesis of acetylaszonalenin via acetylation of aszonalenin at position N1 catalyzed by anaAT. In Neosartorya fischeri (strain ATCC 1020 / DSM 3700 / CBS 544.65 / FGSC A1164 / JCM 1740 / NRRL 181 / WB 181) (Aspergillus fischerianus), this protein is Nonribosomal peptide synthetase anaPS.